A 303-amino-acid chain; its full sequence is AP2-like ethylene-responsive transcription factor At1g79700 (303 aa).

Residues 1-10 are compositionally biased toward basic residues; it reads MAKVSGRSKK. Positions 1–55 are disordered; it reads MAKVSGRSKKTIVDDEISDKTASASESASIALTSKRKRKSPPRNAPLQRSSPYRG. A compositionally biased stretch (polar residues) spans 20–32; the sequence is KTASASESASIAL. DNA-binding regions (AP2/ERF) lie at residues 52-118 and 154-202; these read PYRG…LNFP and KYRG…TNFD. The segment at 212-259 is disordered; it reads AADKADSDSKPIRSPSREPESSDDNKSPKSEEVIEPSTSPEVIPTRRS. The span at 214–243 shows a compositional bias: basic and acidic residues; sequence DKADSDSKPIRSPSREPESSDDNKSPKSEE.

Belongs to the AP2/ERF transcription factor family. AP2 subfamily.

Its subcellular location is the nucleus. Its function is as follows. Probably acts as a transcriptional activator. Binds to the GCC-box pathogenesis-related promoter element. May be involved in the regulation of gene expression by stress factors and by components of stress signal transduction pathways. In Arabidopsis thaliana (Mouse-ear cress), this protein is AP2-like ethylene-responsive transcription factor At1g79700.